We begin with the raw amino-acid sequence, 360 residues long: Photosystem II protein D1 3 (360 aa).

A run of 3 helical transmembrane segments spans residues 29–46 (YVGW…AATI), 118–133 (HFLI…EWEL), and 142–156 (WICV…AATA). His-118 provides a ligand contact to chlorophyll a. Tyr-126 serves as a coordination point for pheophytin a. [CaMn4O5] cluster is bound by residues Asp-170 and Glu-189. Residues 197–218 (FHQLGVAGVFGGALFSAMHGSL) traverse the membrane as a helical segment. His-198 is a chlorophyll a binding site. Residues His-215 and 264–265 (SF) each bind a quinone. His-215 provides a ligand contact to Fe cation. Residue His-272 coordinates Fe cation. Residues 274–288 (FLAAWPVIGIWFTAL) form a helical membrane-spanning segment. Residues His-332, Glu-333, Asp-342, and Ala-344 each coordinate [CaMn4O5] cluster. A propeptide spanning residues 345-360 (SAESAPVAMIAPSING) is cleaved from the precursor.

This sequence belongs to the reaction center PufL/M/PsbA/D family. In terms of assembly, PSII is composed of 1 copy each of membrane proteins PsbA, PsbB, PsbC, PsbD, PsbE, PsbF, PsbH, PsbI, PsbJ, PsbK, PsbL, PsbM, PsbT, PsbX, PsbY, PsbZ, Psb30/Ycf12, peripheral proteins PsbO, CyanoQ (PsbQ), PsbU, PsbV and a large number of cofactors. It forms dimeric complexes. Precursor protein interacts with Ycf48. The D1/D2 heterodimer binds P680, chlorophylls that are the primary electron donor of PSII, and subsequent electron acceptors. It shares a non-heme iron and each subunit binds pheophytin, quinone, additional chlorophylls, carotenoids and lipids. D1 provides most of the ligands for the Mn4-Ca-O5 cluster of the oxygen-evolving complex (OEC). There is also a Cl(-1) ion associated with D1 and D2, which is required for oxygen evolution. The PSII complex binds additional chlorophylls, carotenoids and specific lipids. is required as a cofactor. In terms of processing, C-terminally processed by CtpA; processing is essential to allow assembly of the oxygen-evolving complex and thus photosynthetic growth. Tyr-161 forms a radical intermediate that is referred to as redox-active TyrZ, YZ or Y-Z.

The protein localises to the cellular thylakoid membrane. The catalysed reaction is 2 a plastoquinone + 4 hnu + 2 H2O = 2 a plastoquinol + O2. Its function is as follows. Photosystem II (PSII) is a light-driven water:plastoquinone oxidoreductase that uses light energy to abstract electrons from H(2)O, generating O(2) and a proton gradient subsequently used for ATP formation. It consists of a core antenna complex that captures photons, and an electron transfer chain that converts photonic excitation into a charge separation. The D1/D2 (PsbA/PsbD) reaction center heterodimer binds P680, the primary electron donor of PSII as well as several subsequent electron acceptors. The polypeptide is Photosystem II protein D1 3 (Thermosynechococcus vestitus (strain NIES-2133 / IAM M-273 / BP-1)).